The following is a 364-amino-acid chain: MIIEELHIVNFKSIAAADCRFSPKVNCLVGNNGMGKTNLLDALHFLSFCRSHLSVPDNMVVRHGEEMALLQGLYRDESGDGIELLLSIRPGKHKVLRRNKKEYERLSDHIGHFPLVIVSPQDYQLILGGSDERRRFMDQQLCQQDPRYLSALIQYNRHLQQRNTMLKQDRHDDALMDVLELQMGSYAAEIYNKRSRFIEDFLPVFNDLYSDISGSAEKVSLSYRSHLADGIPLEELLRRSRPKDYLLGFSSCGVHKDELEMLLGGVLIRKIGSEGQNKTFLISMKLAQFRHQQLHGDETPILLLDDIFDKLDATRVERIIRLVGGNGFGQIFITDTNRKNLDEIIASWSEDYRLFEIENGQIFQ.

Residue 30–37 (GNNGMGKT) coordinates ATP.

Belongs to the RecF family.

It is found in the cytoplasm. The RecF protein is involved in DNA metabolism; it is required for DNA replication and normal SOS inducibility. RecF binds preferentially to single-stranded, linear DNA. It also seems to bind ATP. The polypeptide is DNA replication and repair protein RecF (Porphyromonas gingivalis (strain ATCC 33277 / DSM 20709 / CIP 103683 / JCM 12257 / NCTC 11834 / 2561)).